Reading from the N-terminus, the 485-residue chain is MNEYPKKRKRKTLHPSRYSDSSGISRIADGFNGIFSDHCYSVCSMRQPDLKYFDNKDDDSDTETSNDLPKFADGIKARNRNQNYLVPSPVLRILDHTAFSTEKSADIVICDEECDSPESVNQQTQEESPIEVHTAEDVPIAVEVHAISEDYDIETENNSSESLQDQTDEEPPAKLCKILDKSQALNVTAQQKWPLLRANSSGLYKCELCEFNSKYFSDLKQHMILKHKRTDSNVCRVCKESFSTNMLLIEHAKLHEEDPYICKYCDYKTVIFENLSQHIADTHFSDHLYWCEQCDVQFSSSSELYLHFQEHSCDEQYLCQFCEHETNDPEDLHSHVVNEHACKLIELSDKYNNGEHGQYSLLSKITFDKCKNFFVCQVCGFRSRLHTNVNRHVAIEHTKIFPHVCDDCGKGFSSMLEYCKHLNSHLSEGIYLCQYCEYSTGQIEDLKIHLDFKHSADLPHKCSDCLMRFGNERELISHLPVHETT.

Residues 1 to 14 (MNEYPKKRKRKTLH) show a composition bias toward basic residues. A disordered region spans residues 1–20 (MNEYPKKRKRKTLHPSRYSD). A Phosphoserine modification is found at Ser60. A Glycyl lysine isopeptide (Lys-Gly) (interchain with G-Cter in SUMO2) cross-link involves residue Lys76. The residue at position 88 (Ser88) is a Phosphoserine. Residues Lys177, Lys181, and Lys226 each participate in a glycyl lysine isopeptide (Lys-Gly) (interchain with G-Cter in SUMO2) cross-link. 8 consecutive C2H2-type zinc fingers follow at residues 204–227 (YKCE…ILKH), 233–255 (NVCR…AKLH), 260–283 (YICK…ADTH), 289–311 (YWCE…FQEH), 374–397 (FVCQ…AIEH), 403–425 (HVCD…LNSH), 431–454 (YLCQ…DFKH), and 460–482 (HKCS…LPVH). The interval 371-455 (KNFFVCQVCG…LKIHLDFKHS (85 aa)) is interaction with CTNNA2.

This sequence belongs to the krueppel C2H2-type zinc-finger protein family. As to quaternary structure, interacts with CTNNA2.

Its subcellular location is the nucleus. In terms of biological role, binds DNA and may function as a transcriptional repressor. The sequence is that of Zinc finger protein 639 (ZNF639) from Homo sapiens (Human).